Consider the following 137-residue polypeptide: MANKPSAEELKKNLSEMQFYVTQNHGTEPPFTGRLLHNKRDGVYHCLICDAPLFHSQTKYDSGCGWPSFYEPVSEESIRYIKDLSHGMQRIEIRCGNCDAHLGHVFPDGPQPTGERYCVNSASLRFTDGENGEEING.

Positions 7 to 129 (AEELKKNLSE…NSASLRFTDG (123 aa)) constitute a MsrB domain. Zn(2+) contacts are provided by C46, C49, C95, and C98. C118 acts as the Nucleophile in catalysis.

Belongs to the MsrB Met sulfoxide reductase family. Requires Zn(2+) as cofactor.

It carries out the reaction L-methionyl-[protein] + [thioredoxin]-disulfide + H2O = L-methionyl-(R)-S-oxide-[protein] + [thioredoxin]-dithiol. In Escherichia coli (strain K12 / MC4100 / BW2952), this protein is Peptide methionine sulfoxide reductase MsrB.